The following is a 637-amino-acid chain: tRNA uridine 5-carboxymethylaminomethyl modification enzyme MnmG (637 aa).

Residues 15 to 20, Ile-127, and Ser-182 each bind FAD; that span reads GAGHAG. An NAD(+)-binding site is contributed by 276 to 290; it reads GPRYCPSIEDKIVRF. FAD is bound at residue Gln-373.

This sequence belongs to the MnmG family. Homodimer. Heterotetramer of two MnmE and two MnmG subunits. FAD is required as a cofactor.

It localises to the cytoplasm. Its function is as follows. NAD-binding protein involved in the addition of a carboxymethylaminomethyl (cmnm) group at the wobble position (U34) of certain tRNAs, forming tRNA-cmnm(5)s(2)U34. The chain is tRNA uridine 5-carboxymethylaminomethyl modification enzyme MnmG from Streptococcus pneumoniae (strain Hungary19A-6).